Reading from the N-terminus, the 203-residue chain is Small ribosomal subunit protein uS4 (203 aa).

The region spanning 92-164 (TRLDSVVYLL…LEENRIRNVP (73 aa)) is the S4 RNA-binding domain.

Belongs to the universal ribosomal protein uS4 family. Part of the 30S ribosomal subunit. Contacts protein S5. The interaction surface between S4 and S5 is involved in control of translational fidelity.

Functionally, one of the primary rRNA binding proteins, it binds directly to 16S rRNA where it nucleates assembly of the body of the 30S subunit. In terms of biological role, with S5 and S12 plays an important role in translational accuracy. The chain is Small ribosomal subunit protein uS4 from Opitutus terrae (strain DSM 11246 / JCM 15787 / PB90-1).